The chain runs to 66 residues: Nigrocin-2ISa (66 aa).

Residues Met1–Cys22 form the signal peptide. Residues Gln23 to Ile43 constitute a propeptide, removed in mature form. Residues Cys60 and Cys66 are joined by a disulfide bond.

Expressed by the skin glands.

It localises to the secreted. Has antimicrobial activity against Gram-negative bacterium E.coli ATCC 8739 (MIC=25 ug), against Gram positive bacteria S.aureus ATCC 6538 (MIC=3.1 ug), methicillin-resistant S.aureus ATCC 43300 (MIC=12.5 ug), B.subtilis ATCC 6633 (MIC=12.5 ug) and against fungus C.albicans ATCC 90028 (MIC=50 ug). The protein is Nigrocin-2ISa of Odorrana ishikawae (Ishikawa's frog).